The chain runs to 84 residues: MSAFPVHAAFEKDFLVQLVVVDLNDSMDQVAEKVAYHCVNRRVAPREGVMRVRKHRSTELFPRDMTIAESGLNPTEVIDVVFEE.

The protein belongs to the TmoB/XamoB family. The alkene monooxygenase multicomponent enzyme system is composed of an electron transfer component and a monooxygenase component interacting with the effector protein TmoD. The electron transfer component is composed of a ferredoxin reductase (TmoF) and a ferredoxin (TmoC), and the monooxygenase component is formed by a heterohexamer (dimer of heterotrimers) of two alpha subunits (TmoA), two beta subunits (TmoE) and two gamma subunits (TmoB).

The catalysed reaction is toluene + NADH + O2 + H(+) = 4-methylphenol + NAD(+) + H2O. It functions in the pathway xenobiotic degradation; toluene degradation. Inhibited by Zn(2+) and Cu(2+). Component of the toluene-4-monooxygenase multicomponent enzyme system which catalyzes the O2- and NADH-dependent hydroxylation of toluene to form p-cresol. Also able to convert benzene to phenol, catechol, and 1,2,3-trihydroxybenzene by successive hydroxylations. This chain is Toluene-4-monooxygenase system, hydroxylase component subunit gamma, found in Ectopseudomonas mendocina (Pseudomonas mendocina).